The chain runs to 269 residues: Glucosyl-3-phosphoglycerate/mannosyl-3-phosphoglycerate phosphatase (269 aa).

D6 (nucleophile) is an active-site residue. 3 residues coordinate Mg(2+): D6, D8, and D210.

It belongs to the HAD-like hydrolase superfamily. MPGP family. In terms of assembly, monomer. Requires Co(2+) as cofactor. Mg(2+) is required as a cofactor.

It catalyses the reaction (2R)-2-O-(alpha-D-glucopyranosyl)-3-phospho-glycerate + H2O = (2R)-2-O-(alpha-D-glucopyranosyl)-glycerate + phosphate. It carries out the reaction 2-O-(alpha-D-mannosyl)-3-phosphoglycerate + H2O = (2R)-2-O-(alpha-D-mannosyl)-glycerate + phosphate. In terms of biological role, involved in the biosynthesis of glucosylglycerate. Catalyzes the dephosphorylation of glucosyl-3-phosphoglycerate (GPG) and mannosyl-3-phosphoglycerate (MPG) to glucosylglycerate (GG) and mannosylglycerate (MG), respectively. The chain is Glucosyl-3-phosphoglycerate/mannosyl-3-phosphoglycerate phosphatase from Persephonella marina (strain DSM 14350 / EX-H1).